A 464-amino-acid polypeptide reads, in one-letter code: Hydrogen cyanide synthase subunit HcnB (464 aa).

Heterotrimer of HcnA, HcnB and HcnC.

Its subcellular location is the cell membrane. It catalyses the reaction glycine + 2 A = hydrogen cyanide + 2 AH2 + CO2. Oxygen is necessary for cyanogenesis. Activated by succinate, glycine methyl ester, glucose and D,L-methionine in addition to glycine. Phenazine methosulfate, methylene blue, 2,6-dichlorophenolindophenol (DCIP) and ferricyanide can replace oxygen for the reaction. Inhibited by pyrrolnitrin and acriflavine at 1 mM concentration. In terms of biological role, a three-component membrane-bound flavoenzyme that catalyzes the formation of hydrogen cyanide, a secondary metabolite, by transfer of electrons to a cyanide-resistant branch of the aerobic respiratory chain. In Pseudomonas aeruginosa (strain ATCC 15692 / DSM 22644 / CIP 104116 / JCM 14847 / LMG 12228 / 1C / PRS 101 / PAO1), this protein is Hydrogen cyanide synthase subunit HcnB.